The chain runs to 277 residues: Large ribosomal subunit protein uL2 (277 aa).

A disordered region spans residues 222–277 (GVAMNPVDHPHGGGEGRTSGGRHPVSPWGKPTKGKRTRSNKATDKFIMRTRHQRKK).

Belongs to the universal ribosomal protein uL2 family. As to quaternary structure, part of the 50S ribosomal subunit. Forms a bridge to the 30S subunit in the 70S ribosome.

Functionally, one of the primary rRNA binding proteins. Required for association of the 30S and 50S subunits to form the 70S ribosome, for tRNA binding and peptide bond formation. It has been suggested to have peptidyltransferase activity; this is somewhat controversial. Makes several contacts with the 16S rRNA in the 70S ribosome. This chain is Large ribosomal subunit protein uL2, found in Bartonella tribocorum (strain CIP 105476 / IBS 506).